A 948-amino-acid polypeptide reads, in one-letter code: Non-lysosomal glucosylceramidase (948 aa).

At 1-736 (MAEPLAVETK…VMDGPSAYCS (736 aa)) the chain is on the extracellular side. Residues 177 to 195 (STRDKTSDPDGDPDGERTK) are compositionally biased toward basic and acidic residues. Residues 177–197 (STRDKTSDPDGDPDGERTKCQ) form a disordered region. A glycan (N-linked (GlcNAc...) asparagine) is linked at Asn-200. Ser-214 is modified (phosphoserine). N-linked (GlcNAc...) asparagine glycosylation is found at Asn-288, Asn-555, and Asn-629. Ser-667 and Ser-669 each carry phosphoserine. N-linked (GlcNAc...) asparagine glycosylation occurs at Asn-673. Residues 737-753 (GLWLAALQAMSAMATIL) form a helical membrane-spanning segment. Topologically, residues 754 to 948 (DQPNDCLRYQ…ALERRRAQRD (195 aa)) are cytoplasmic.

Belongs to the non-lysosomal glucosylceramidase family.

It is found in the cell membrane. The enzyme catalyses a beta-D-glucosyl-(1&lt;-&gt;1')-N-acylsphing-4-enine + H2O = an N-acylsphing-4-enine + D-glucose. In terms of biological role, non-lysosomal glucosylceramidase that catalyzes the conversion of glucosylceramide to free glucose and ceramide. The polypeptide is Non-lysosomal glucosylceramidase (Drosophila melanogaster (Fruit fly)).